The primary structure comprises 255 residues: MSQEFLARILEQKAHEVEQMKLEQIQPLRQTYRLAEFLKNHQDRLQVIAEVKKASPSLGDINLDVDIVQQAQTYEENGTVMISVLTDEVFFKGHLNYLREISSQVEIPTLNKDFIIDEKQIIRARNAGATVILLIVAALSEERLKKLYDYATELGLEVLVETHNLAELEVAHRLGAEIIGVNNRNLTTFEVDLQTSVDLAPYFEEGRYYISESAIFTGQDAERLAPYFNGILVGTALMQAENVAQRIKELQIDKG.

It belongs to the TrpC family.

The catalysed reaction is 1-(2-carboxyphenylamino)-1-deoxy-D-ribulose 5-phosphate + H(+) = (1S,2R)-1-C-(indol-3-yl)glycerol 3-phosphate + CO2 + H2O. Its pathway is amino-acid biosynthesis; L-tryptophan biosynthesis; L-tryptophan from chorismate: step 4/5. The chain is Indole-3-glycerol phosphate synthase from Streptococcus pneumoniae (strain 70585).